Reading from the N-terminus, the 200-residue chain is A-type ATP synthase subunit E 3 (200 aa).

The protein belongs to the V-ATPase E subunit family. In terms of assembly, has multiple subunits with at least A(3), B(3), C, D, E, F, H, I and proteolipid K(x).

It is found in the cell membrane. Functionally, component of the A-type ATP synthase that produces ATP from ADP in the presence of a proton gradient across the membrane. The protein is A-type ATP synthase subunit E 3 of Methanospirillum hungatei JF-1 (strain ATCC 27890 / DSM 864 / NBRC 100397 / JF-1).